A 201-amino-acid chain; its full sequence is Translation initiation factor IF-3 (201 aa).

Belongs to the IF-3 family. In terms of assembly, monomer.

It localises to the cytoplasm. IF-3 binds to the 30S ribosomal subunit and shifts the equilibrium between 70S ribosomes and their 50S and 30S subunits in favor of the free subunits, thus enhancing the availability of 30S subunits on which protein synthesis initiation begins. This Mycoplasma pneumoniae (strain ATCC 29342 / M129 / Subtype 1) (Mycoplasmoides pneumoniae) protein is Translation initiation factor IF-3.